An 81-amino-acid polypeptide reads, in one-letter code: uncharacterized protein (81 aa).

This is an uncharacterized protein from Acidianus bottle-shaped virus (isolate Italy/Pozzuoli) (ABV).